We begin with the raw amino-acid sequence, 264 residues long: Elongation factor Ts (264 aa).

Residues 76 to 79 (TDFV) form an involved in Mg(2+) ion dislocation from EF-Tu region.

Belongs to the EF-Ts family.

The protein localises to the cytoplasm. Its function is as follows. Associates with the EF-Tu.GDP complex and induces the exchange of GDP to GTP. It remains bound to the aminoacyl-tRNA.EF-Tu.GTP complex up to the GTP hydrolysis stage on the ribosome. The polypeptide is Elongation factor Ts (Deinococcus radiodurans (strain ATCC 13939 / DSM 20539 / JCM 16871 / CCUG 27074 / LMG 4051 / NBRC 15346 / NCIMB 9279 / VKM B-1422 / R1)).